We begin with the raw amino-acid sequence, 1579 residues long: MAP kinase kinase kinase SSK2 (1579 aa).

The segment at 1-70 (MSHSDYFNYK…HSTQYFRSPN (70 aa)) is disordered. Residues 21–44 (SSKMRQSSSSSSSRLRSESLGRNS) show a composition bias toward low complexity. Residues 45-67 (NTTQARVASSPISPGLHSTQYFR) show a composition bias toward polar residues. A phosphoserine mark is found at S57, S62, S78, and S118. Disordered regions lie at residues 97–155 (FFHQ…ESEI) and 190–243 (SIMS…GSTT). The span at 104–118 (SGSSSSSARSSRRPS) shows a compositional bias: low complexity. The segment covering 127 to 139 (NPQQSLPKLSTQP) has biased composition (polar residues). The segment covering 144–155 (KKVEASKTESEI) has biased composition (basic and acidic residues). S290 bears the Phosphoserine mark. The Protein kinase domain occupies 1266-1558 (WQKRNFIGGG…AVELLMDPWI (293 aa)). ATP is bound by residues 1272-1280 (IGGGTFGRV) and K1295. D1390 functions as the Proton acceptor in the catalytic mechanism. S1424 is modified (phosphoserine).

Belongs to the protein kinase superfamily. STE Ser/Thr protein kinase family. MAP kinase kinase kinase subfamily. In terms of assembly, interacts with by SSK1.

The catalysed reaction is L-seryl-[protein] + ATP = O-phospho-L-seryl-[protein] + ADP + H(+). It carries out the reaction L-threonyl-[protein] + ATP = O-phospho-L-threonyl-[protein] + ADP + H(+). Kinase involved in a signal transduction pathway that is activated by changes in the osmolarity of the extracellular environment. Activates the PBS2 MAP kinase kinase by phosphorylation. The protein is MAP kinase kinase kinase SSK2 (SSK2) of Saccharomyces cerevisiae (strain ATCC 204508 / S288c) (Baker's yeast).